The chain runs to 347 residues: Homeobox protein knotted-1-like 9 (347 aa).

Over residues 1 to 17 the composition is skewed to low complexity; the sequence is MESFASLAGGGSSSTTA. 3 disordered regions span residues 1–36, 122–145, and 179–206; these read MESFASLAGGGSSSTTARLPELIPPENPDRISPPPL, QQLDAADGHPRRRHEPRRDDDVPD, and DSNCEGTGSSEEEQDTSCPEAEEIDPSD. Residues 22–36 are compositionally biased toward pro residues; that stretch reads LIPPENPDRISPPPL. Over residues 188–203 the composition is skewed to acidic residues; it reads SEEEQDTSCPEAEEID. An ELK domain is found at 208–228; it reads QLKHQLLMKYGGSLGDLRQAF. Positions 229 to 293 form a DNA-binding region, homeobox; TALE-type; that stretch reads SKRTKKGKLP…NQRKRHWKPT (65 aa).

The protein belongs to the TALE/KNOX homeobox family.

It localises to the nucleus. This chain is Homeobox protein knotted-1-like 9, found in Oryza sativa subsp. japonica (Rice).